Consider the following 238-residue polypeptide: Flagellar L-ring protein (238 aa).

An N-terminal signal peptide occupies residues 1 to 16 (MNKAILAVAMVLLLAG). A lipid anchor (N-palmitoyl cysteine) is attached at cysteine 17. Residue cysteine 17 is the site of S-diacylglycerol cysteine attachment.

This sequence belongs to the FlgH family. As to quaternary structure, the basal body constitutes a major portion of the flagellar organelle and consists of four rings (L,P,S, and M) mounted on a central rod.

The protein resides in the cell outer membrane. It localises to the bacterial flagellum basal body. In terms of biological role, assembles around the rod to form the L-ring and probably protects the motor/basal body from shearing forces during rotation. The chain is Flagellar L-ring protein from Brucella canis (strain ATCC 23365 / NCTC 10854 / RM-666).